A 182-amino-acid chain; its full sequence is NADH-quinone oxidoreductase subunit I (182 aa).

2 consecutive 4Fe-4S ferredoxin-type domains span residues 52–82 and 92–121; these read LTRDPDGEERCVACNLCAVACPVGCISLQKA and EFFRINFSRCIFCGLCEEACPTTAIQLTPD. Positions 62, 65, 68, 72, 101, 104, 107, and 111 each coordinate [4Fe-4S] cluster.

The protein belongs to the complex I 23 kDa subunit family. In terms of assembly, NDH-1 is composed of 13 different subunits. Subunits NuoA, H, J, K, L, M, N constitute the membrane sector of the complex. [4Fe-4S] cluster is required as a cofactor.

Its subcellular location is the cell inner membrane. It carries out the reaction a quinone + NADH + 5 H(+)(in) = a quinol + NAD(+) + 4 H(+)(out). Functionally, NDH-1 shuttles electrons from NADH, via FMN and iron-sulfur (Fe-S) centers, to quinones in the respiratory chain. The immediate electron acceptor for the enzyme in this species is believed to be ubiquinone. Couples the redox reaction to proton translocation (for every two electrons transferred, four hydrogen ions are translocated across the cytoplasmic membrane), and thus conserves the redox energy in a proton gradient. The polypeptide is NADH-quinone oxidoreductase subunit I (Pseudomonas entomophila (strain L48)).